The chain runs to 554 residues: Pigment biosynthesis transcriptional activator pigB (554 aa).

The segment at 1–21 (MFTSSSPEQRKPRQSRQLPGA) is disordered. Residues 23–40 (CEECRRKKLRCDRQQPQC) constitute a DNA-binding region (zn(2)-C6 fungal-type).

It localises to the nucleus. In terms of biological role, transcription factor; part of the gene cluster that mediates the biosynthesis of azaphilone pigments (MonAzPs), a complex mixture of compounds with a common azaphilone skeleton very widely used as food colorants. Positively regulates the expression of the azaphilone pigments (MonAzPs) gene cluster. This Monascus ruber (Mold) protein is Pigment biosynthesis transcriptional activator pigB.